Here is a 320-residue protein sequence, read N- to C-terminus: Cytochrome f (320 aa).

The signal sequence occupies residues 1–35 (MQTRNTFFWIKEQMTRSISVSIIVYVITQTSISNA). Residues Tyr-36, Cys-56, Cys-59, and His-60 each coordinate heme. A helical membrane pass occupies residues 286–306 (VQGLLFFFASVILAQIFLVLK).

This sequence belongs to the cytochrome f family. In terms of assembly, the 4 large subunits of the cytochrome b6-f complex are cytochrome b6, subunit IV (17 kDa polypeptide, petD), cytochrome f and the Rieske protein, while the 4 small subunits are PetG, PetL, PetM and PetN. The complex functions as a dimer. Heme serves as cofactor.

The protein localises to the plastid. It is found in the chloroplast thylakoid membrane. Functionally, component of the cytochrome b6-f complex, which mediates electron transfer between photosystem II (PSII) and photosystem I (PSI), cyclic electron flow around PSI, and state transitions. This Buxus microphylla (Littleleaf boxwood) protein is Cytochrome f.